Consider the following 349-residue polypeptide: MSDNRAQFLEVFPSLVQELRDILAGYGMPEEAIEWYEKSLNYNTPGGKLNRGLSVVDTYALLKGYKSVSELSAEEYKKVAILGWCIELLQAYFLVADDMMDQSITRRGQPCWYKVENVGDIAINDAFMLEGAIYCLLKKHFRTEPYYVDLLELFHDVTFQTELGQLLDLITAPEDKVDLSKFSLEKHSFIVIFKTAYYSFYLAVALAMFAAGITDSKDLKQASDVLIPLGEYFQIQDDFLDCFGKPEDIGKIGTDIQDNKCSWVINVALKNATKEQRDILDENYGRKDSEKEQKCRAVFNELNIQDIYHKYEEETASNLREKIANIDESRGFKAEVLTLFLNKIYHRKK.

Positions 48, 51, and 90 each coordinate isopentenyl diphosphate. Positions 97 and 101 each coordinate Mg(2+). Arg106 is a dimethylallyl diphosphate binding site. Residue Arg107 coordinates isopentenyl diphosphate. Lys194, Thr195, Gln234, Lys251, and Lys260 together coordinate dimethylallyl diphosphate.

Belongs to the FPP/GGPP synthase family. Mg(2+) serves as cofactor.

The protein localises to the cytoplasm. The catalysed reaction is isopentenyl diphosphate + dimethylallyl diphosphate = (2E)-geranyl diphosphate + diphosphate. It catalyses the reaction isopentenyl diphosphate + (2E)-geranyl diphosphate = (2E,6E)-farnesyl diphosphate + diphosphate. It functions in the pathway isoprenoid biosynthesis; farnesyl diphosphate biosynthesis; farnesyl diphosphate from geranyl diphosphate and isopentenyl diphosphate: step 1/1. It participates in isoprenoid biosynthesis; geranyl diphosphate biosynthesis; geranyl diphosphate from dimethylallyl diphosphate and isopentenyl diphosphate: step 1/1. Its function is as follows. Catalyzes the sequential condensation of isopentenyl pyrophosphate with the allylic pyrophosphates, dimethylallyl pyrophosphate, and then with the resultant geranylpyrophosphate to the ultimate product farnesyl pyrophosphate. In Kluyveromyces lactis (strain ATCC 8585 / CBS 2359 / DSM 70799 / NBRC 1267 / NRRL Y-1140 / WM37) (Yeast), this protein is Farnesyl pyrophosphate synthase (FPS1).